The primary structure comprises 766 residues: AMP deaminase 3 (766 aa).

Residues S85 and S107 each carry the phosphoserine modification. Residues 89–114 (QMPTQQDWKGPPTASPAMSPATPLVP) are disordered. A compositionally biased stretch (low complexity) spans 99–110 (PPTASPAMSPAT). The Zn(2+) site is built by H316 and H318. Substrate contacts are provided by residues H318 and 387-392 (KFNSKY). H585 is a binding site for Zn(2+). E588 lines the substrate pocket. The active-site Proton acceptor is the H607. Zn(2+) is bound at residue D662. Residue 663 to 666 (DPMQ) participates in substrate binding.

This sequence belongs to the metallo-dependent hydrolases superfamily. Adenosine and AMP deaminases family. Homotetramer. It depends on Zn(2+) as a cofactor. In terms of tissue distribution, found in heart, lung brain, spleen, kidney and to a lesser extent in liver.

It carries out the reaction AMP + H2O + H(+) = IMP + NH4(+). Its pathway is purine metabolism; IMP biosynthesis via salvage pathway; IMP from AMP: step 1/1. AMP deaminase plays a critical role in energy metabolism. This chain is AMP deaminase 3, found in Mus musculus (Mouse).